Here is a 252-residue protein sequence, read N- to C-terminus: Triosephosphate isomerase (252 aa).

10–12 (NWK) is a substrate binding site. H96 serves as the catalytic Electrophile. E168 functions as the Proton acceptor in the catalytic mechanism. Substrate contacts are provided by residues G174, S214, and 235–236 (GG).

Belongs to the triosephosphate isomerase family. Homodimer.

Its subcellular location is the cytoplasm. It carries out the reaction D-glyceraldehyde 3-phosphate = dihydroxyacetone phosphate. The protein operates within carbohydrate biosynthesis; gluconeogenesis. Its pathway is carbohydrate degradation; glycolysis; D-glyceraldehyde 3-phosphate from glycerone phosphate: step 1/1. In terms of biological role, involved in the gluconeogenesis. Catalyzes stereospecifically the conversion of dihydroxyacetone phosphate (DHAP) to D-glyceraldehyde-3-phosphate (G3P). The chain is Triosephosphate isomerase from Streptococcus equi subsp. zooepidemicus (strain MGCS10565).